We begin with the raw amino-acid sequence, 247 residues long: tRNA pseudouridine synthase A (247 aa).

Asp52 acts as the Nucleophile in catalysis. Residue Tyr113 participates in substrate binding.

The protein belongs to the tRNA pseudouridine synthase TruA family. As to quaternary structure, homodimer.

The catalysed reaction is uridine(38/39/40) in tRNA = pseudouridine(38/39/40) in tRNA. Its function is as follows. Formation of pseudouridine at positions 38, 39 and 40 in the anticodon stem and loop of transfer RNAs. The polypeptide is tRNA pseudouridine synthase A (Sinorhizobium fredii (strain NBRC 101917 / NGR234)).